A 124-amino-acid polypeptide reads, in one-letter code: uncharacterized protein (124 aa).

A helical transmembrane segment spans residues 2–22 (AIIIAIIAAVIVIAALITFNV). Residues 24 to 124 (NASPGPEKQE…ALLSMKNKKK (101 aa)) form a disordered region. Basic and acidic residues-rich tracts occupy residues 30 to 58 (EKQE…RAAE), 67 to 81 (DSPK…DDIY), and 89 to 113 (KHSD…RSYR).

Its subcellular location is the membrane. This is an uncharacterized protein from Bacillus subtilis (strain 168).